A 235-amino-acid polypeptide reads, in one-letter code: Transcription factor hepR (235 aa).

A disordered region spans residues 14–45 (QNSPESSRDVLSMASPGLLPIDPSPEHDETNK). The segment at 175 to 205 (IQCPCLDERGERCSRMFSRLDNMRDHVRRIH) adopts a C2H2-type zinc-finger fold.

The protein resides in the nucleus. Functionally, transcription factor; part of the gene cluster that mediates the biosynthesis of heptelidic acid (HA), a sesquiterpene lactone that acts as an inhibitor of glyceraldehyde-3-phosphatedehydrogenase (GAPDH) and a growth inhibitor of the salt-tolerant lactic acid bacteria in soy sauce brewing. Both hepR and hepS regulate the transcription of the heptelidic acid cluster, but they are not involved in mutual transcriptional regulation and act with different mechanisms. The chain is Transcription factor hepR from Aspergillus oryzae (strain ATCC 42149 / RIB 40) (Yellow koji mold).